A 636-amino-acid chain; its full sequence is Fructose-1,6-bisphosphatase class 3 (636 aa).

The protein belongs to the FBPase class 3 family. Requires Mn(2+) as cofactor.

It carries out the reaction beta-D-fructose 1,6-bisphosphate + H2O = beta-D-fructose 6-phosphate + phosphate. It participates in carbohydrate biosynthesis; gluconeogenesis. The protein is Fructose-1,6-bisphosphatase class 3 of Streptococcus sanguinis (strain SK36).